Here is a 216-residue protein sequence, read N- to C-terminus: Ceramide-1-phosphate transfer protein (216 aa).

An N-acylsphingoid base 1-phosphate is bound by residues Asp56, Lys60, Arg108, Arg112, and His152.

This sequence belongs to the GLTP family.

It localises to the cytoplasm. The protein localises to the cytosol. It is found in the golgi apparatus. The protein resides in the trans-Golgi network membrane. Its subcellular location is the cell membrane. It localises to the endosome membrane. The protein localises to the nucleus outer membrane. The catalysed reaction is N-(hexadecanoyl)-sphing-4-enine-1-phosphate(in) = N-(hexadecanoyl)-sphing-4-enine-1-phosphate(out). It carries out the reaction N-(9Z-octadecenoyl)-sphing-4-enine-1-phosphate(in) = N-(9Z-octadecenoyl)-sphing-4-enine-1-phosphate(out). Functionally, mediates the intracellular transfer of ceramide-1-phosphate (C1P) between organelle membranes and the cell membrane. Required for normal structure of the Golgi stacks. Can bind phosphoceramides with a variety of aliphatic chains, but has a preference for lipids with saturated C16:0 or monounsaturated C18:1 aliphatic chains, and is inefficient with phosphoceramides containing lignoceryl (C24:0). Plays a role in the regulation of the cellular levels of ceramide-1-phosphate, and thereby contributes to the regulation of phospholipase PLA2G4A activity and the release of arachidonic acid. Has no activity with galactosylceramide, lactosylceramide, sphingomyelin, phosphatidylcholine, phosphatidic acid and ceramide. C1P transfer is stimulated by phosphatidylserine in C1P source vesicles. Regulates autophagy, inflammasome mediated IL1B and IL18 processing, and pyroptosis, but not apoptosis. The chain is Ceramide-1-phosphate transfer protein from Mus musculus (Mouse).